The sequence spans 409 residues: Arginine deiminase (409 aa).

C399 (amidino-cysteine intermediate) is an active-site residue.

This sequence belongs to the arginine deiminase family.

Its subcellular location is the cytoplasm. The catalysed reaction is L-arginine + H2O = L-citrulline + NH4(+). Its pathway is amino-acid degradation; L-arginine degradation via ADI pathway; carbamoyl phosphate from L-arginine: step 1/2. The protein is Arginine deiminase of Streptococcus sanguinis (strain SK36).